We begin with the raw amino-acid sequence, 387 residues long: Phosphoglycerate kinase (387 aa).

Substrate is bound by residues aspartate 21–asparagine 23, arginine 36, histidine 59–arginine 62, arginine 113, and arginine 146. ATP contacts are provided by residues lysine 197, glutamate 314, and glycine 340–threonine 343.

Belongs to the phosphoglycerate kinase family. As to quaternary structure, monomer.

It localises to the cytoplasm. It carries out the reaction (2R)-3-phosphoglycerate + ATP = (2R)-3-phospho-glyceroyl phosphate + ADP. Its pathway is carbohydrate degradation; glycolysis; pyruvate from D-glyceraldehyde 3-phosphate: step 2/5. This is Phosphoglycerate kinase from Cronobacter sakazakii (strain ATCC BAA-894) (Enterobacter sakazakii).